Consider the following 802-residue polypeptide: Elongation factor G, mitochondrial (802 aa).

The N-terminal 24 residues, 1–24 (MRYPSLARLPRRALSGLARAPVRL), are a transit peptide targeting the mitochondrion. The tr-type G domain occupies 100–387 (SRVRNIGIAA…GVIDYLPNPS (288 aa)). GTP is bound by residues 109–116 (AHIDSGKT), 185–189 (DTPGH), and 239–242 (NKMD).

It belongs to the TRAFAC class translation factor GTPase superfamily. Classic translation factor GTPase family. EF-G/EF-2 subfamily.

The protein resides in the mitochondrion. It functions in the pathway protein biosynthesis; polypeptide chain elongation. Its function is as follows. Mitochondrial GTPase that catalyzes the GTP-dependent ribosomal translocation step during translation elongation. During this step, the ribosome changes from the pre-translocational (PRE) to the post-translocational (POST) state as the newly formed A-site-bound peptidyl-tRNA and P-site-bound deacylated tRNA move to the P and E sites, respectively. Catalyzes the coordinated movement of the two tRNA molecules, the mRNA and conformational changes in the ribosome. In Aspergillus terreus (strain NIH 2624 / FGSC A1156), this protein is Elongation factor G, mitochondrial (mef1).